Consider the following 287-residue polypeptide: D-apionate oxidoisomerase (287 aa).

Residues 13 to 15 (GKM), Glu36, and Asp71 each bind NAD(+). Zn(2+) contacts are provided by His116 and Glu186.

This sequence belongs to the ApnO family. It depends on Zn(2+) as a cofactor.

It catalyses the reaction D-apionate + NAD(+) = 3-oxoisoapionate + NADH + H(+). It participates in carbohydrate metabolism. Its function is as follows. Involved in catabolism of D-apiose. Catalyzes the conversion of D-apionate to 3-oxo-isoapionate. The polypeptide is D-apionate oxidoisomerase (Blautia hydrogenotrophica (strain DSM 10507 / JCM 14656 / S5a33) (Ruminococcus hydrogenotrophicus)).